Reading from the N-terminus, the 515-residue chain is BURP domain-containing protein 9 (515 aa).

An N-terminal signal peptide occupies residues 1–29; the sequence is MKATGGPLPLILFLLIIIVLITAQHTAIA. The BURP domain maps to 292–507; that stretch reads YFFEDNLAPG…GRGSIIWVPV (216 aa). N-linked (GlcNAc...) asparagine glycosylation is found at asparagine 321, asparagine 332, and asparagine 470.

Expressed in shoot and panicles.

The protein is BURP domain-containing protein 9 (BURP9) of Oryza sativa subsp. japonica (Rice).